Consider the following 1220-residue polypeptide: Post-transcriptional regulator MKT1L (1220 aa).

The interval 1 to 107 is disordered; that stretch reads MRKAGANRNN…SPWNSPPQQT (107 aa). Positions 34-70 are enriched in basic residues; it reads PHHHQHQHHHQHQHQHQHQHQHPHQHPHQHHHHHPHH.

The protein belongs to the XPG/RAD2 endonuclease family. Forms a complex composed of at least MKT1L, PBP1, XAC1 and LSM12.

The protein resides in the cytoplasm. In terms of biological role, involved in post-transcriptional regulation of gene expression. This chain is Post-transcriptional regulator MKT1L, found in Trypanosoma brucei brucei (strain 927/4 GUTat10.1).